A 270-amino-acid polypeptide reads, in one-letter code: MSVEQSLLGKETQYPTSYQPDVLFPIARAQSREKYAHIQGITQGKDWWHVFEISWLNAHGIPQVAIGRITLPASSPNLIESKSLKLYFNSLNFTQFDSTQSFIETVEKDLSAAAGAKVELTLFQVDDLEISKPQGICIDDLMPERLEQHPDATLLKLDESGEEIEVELYSHLLRSNCPVTGQPDWGTVFIRFKGKKPCYRSLLAYIISYRQHNGFHEQCVEQIFADIWQNLQPEKLMVYATYTRRGGLDINPCRVSDLTWMPKPIRLARQ.

A substrate-binding site is contributed by 79 to 81 (IES). 81 to 82 (SK) lines the NADPH pocket. The Thioimide intermediate role is filled by Cys177. Asp184 acts as the Proton donor in catalysis. Residue 216–217 (HE) coordinates substrate. 245–246 (RG) is an NADPH binding site.

The protein belongs to the GTP cyclohydrolase I family. QueF type 2 subfamily. In terms of assembly, homodimer.

The protein localises to the cytoplasm. It catalyses the reaction 7-aminomethyl-7-carbaguanine + 2 NADP(+) = 7-cyano-7-deazaguanine + 2 NADPH + 3 H(+). It participates in tRNA modification; tRNA-queuosine biosynthesis. Its function is as follows. Catalyzes the NADPH-dependent reduction of 7-cyano-7-deazaguanine (preQ0) to 7-aminomethyl-7-deazaguanine (preQ1). The protein is NADPH-dependent 7-cyano-7-deazaguanine reductase of Acinetobacter baumannii (strain AB307-0294).